Here is a 353-residue protein sequence, read N- to C-terminus: Trans-enoyl reductase RAP2 (353 aa).

An NADP(+)-binding site is contributed by 46-49 (CDHK). A substrate-binding site is contributed by 131–138 (TGLSTIGM). NADP(+) contacts are provided by residues 189–192 (SPRN), tyrosine 207, and 254–255 (LE). 274–278 (GMALL) is a binding site for substrate. 343–344 (VS) is a binding site for NADP(+).

It belongs to the zinc-containing alcohol dehydrogenase family. As to quaternary structure, monomer.

Its pathway is secondary metabolite biosynthesis. Trans-enoyl reductase; part of the gene cluster that mediates the biosynthesis of a tyrosine-derived cytochalasan acting as a fungal signal recognized by resistant rice plants and leads to avirulence in Pi33 resistant rice cultivars. The first step in the pathway is catalyzed by the hybrid PKS-NRPS ACE1, assisted by the enoyl reductase RAP1, that are responsible for fusion of the tyrosine precursor and the polyketide backbone. The polyketide synthase module (PKS) of ACE1 is responsible for the synthesis of the polyketide backbone and the downstream nonribosomal peptide synthetase (NRPS) amidates the carboxyl end of the polyketide with the tyrosine precursor. Because ACE1 lacks a designated enoylreductase (ER) domain, the required activity is provided the enoyl reductase RAP1. Reduction by the hydrolyase ORFZ, followed by dehydration and intra-molecular Diels-Alder cyclization by the Diels-Alderase ORF3 then yield the required isoindolone-fused macrocycle. A number of oxidative steps catalyzed by the tailoring enzymes identified within the cluster, including cytochrome P450 monooxygenases CYP1 to CYP4, the FAD-linked oxidoreductase OXR2 and the short-chain dehydrogenase/reductase OXR1, are further required to afford the final cytochalasans that confer avirulence and which have still to be identified. The monooxygenase CYP1 has been shown to be a site-selective C-18 hydroxylase whereas the function of CYP3 is the site-selective epoxidation of the C-6/C-7 olefin that is present in some intermediate compounds. Finally, SYN2 and RAP2 are not required for avirulence in Pi33 resistant rice cultivars. The protein is Trans-enoyl reductase RAP2 of Pyricularia oryzae (strain 70-15 / ATCC MYA-4617 / FGSC 8958) (Rice blast fungus).